Consider the following 308-residue polypeptide: Isoflavone reductase-like protein (308 aa).

NADP(+) contacts are provided by residues 11–17, Arg-36, and Lys-45; that span reads GGTGYIG. Lys-133 functions as the Proton acceptor in the catalytic mechanism. Position 137 (Arg-137) interacts with NADP(+).

Belongs to the NmrA-type oxidoreductase family. Isoflavone reductase subfamily. Homodimer.

It is found in the cytoplasm. The sequence is that of Isoflavone reductase-like protein from Olea europaea (Common olive).